The following is an 85-amino-acid chain: Small ribosomal subunit protein bS20 (85 aa).

The interval 1–25 is disordered; sequence MANIKSAIKRAKLSEERRAHNASIK.

It belongs to the bacterial ribosomal protein bS20 family.

Binds directly to 16S ribosomal RNA. This Bacillus anthracis (strain A0248) protein is Small ribosomal subunit protein bS20.